The sequence spans 900 residues: DNA mismatch repair protein MutS (900 aa).

637 to 644 (GPNMAGKS) contacts ATP.

It belongs to the DNA mismatch repair MutS family.

This protein is involved in the repair of mismatches in DNA. It is possible that it carries out the mismatch recognition step. This protein has a weak ATPase activity. The polypeptide is DNA mismatch repair protein MutS (Methanosarcina mazei (strain ATCC BAA-159 / DSM 3647 / Goe1 / Go1 / JCM 11833 / OCM 88) (Methanosarcina frisia)).